Reading from the N-terminus, the 95-residue chain is uncharacterized protein (95 aa).

3 helical membrane-spanning segments follow: residues tyrosine 3–phenylalanine 23, isoleucine 35–threonine 55, and methionine 63–isoleucine 83.

Its subcellular location is the cell membrane. This is an uncharacterized protein from Mycoplasma pneumoniae (strain ATCC 29342 / M129 / Subtype 1) (Mycoplasmoides pneumoniae).